A 368-amino-acid chain; its full sequence is Protein RecA (368 aa).

72–79 (GNESSGKT) provides a ligand contact to ATP.

It belongs to the RecA family.

It is found in the cytoplasm. Functionally, can catalyze the hydrolysis of ATP in the presence of single-stranded DNA, the ATP-dependent uptake of single-stranded DNA by duplex DNA, and the ATP-dependent hybridization of homologous single-stranded DNAs. It interacts with LexA causing its activation and leading to its autocatalytic cleavage. The protein is Protein RecA of Petrotoga mobilis (strain DSM 10674 / SJ95).